The primary structure comprises 306 residues: Ornithine carbamoyltransferase (306 aa).

Carbamoyl phosphate is bound by residues serine 54–threonine 57, glutamine 81, arginine 105, and histidine 132–glutamine 135. Residues asparagine 162, aspartate 226, and serine 230–methionine 231 contribute to the L-ornithine site. Residues cysteine 266 to leucine 267 and arginine 294 each bind carbamoyl phosphate.

The protein belongs to the aspartate/ornithine carbamoyltransferase superfamily. OTCase family.

The protein resides in the cytoplasm. The enzyme catalyses carbamoyl phosphate + L-ornithine = L-citrulline + phosphate + H(+). The protein operates within amino-acid biosynthesis; L-arginine biosynthesis; L-arginine from L-ornithine and carbamoyl phosphate: step 1/3. Reversibly catalyzes the transfer of the carbamoyl group from carbamoyl phosphate (CP) to the N(epsilon) atom of ornithine (ORN) to produce L-citrulline. The sequence is that of Ornithine carbamoyltransferase from Sulfolobus acidocaldarius (strain ATCC 33909 / DSM 639 / JCM 8929 / NBRC 15157 / NCIMB 11770).